The following is a 361-amino-acid chain: Mitogen-activated protein kinase 14A (361 aa).

Positions 25-309 (YQNLSPVGSG…AAEALAHPYF (285 aa)) constitute a Protein kinase domain. ATP contacts are provided by residues 31–39 (VGSGAYGSV) and Lys54. Asp169 acts as the Proton acceptor in catalysis. Thr181 is subject to Phosphothreonine; by MAP2K3. Positions 181 to 183 (TGY) match the TXY motif. Tyr183 is subject to Phosphotyrosine; by MAP2K3.

It belongs to the protein kinase superfamily. CMGC Ser/Thr protein kinase family. MAP kinase subfamily. Mg(2+) is required as a cofactor. Post-translationally, dually phosphorylated on Thr-181 and Tyr-183, which activates the enzyme.

The protein localises to the cytoplasm. Its subcellular location is the nucleus. The catalysed reaction is L-seryl-[protein] + ATP = O-phospho-L-seryl-[protein] + ADP + H(+). The enzyme catalyses L-threonyl-[protein] + ATP = O-phospho-L-threonyl-[protein] + ADP + H(+). With respect to regulation, activated by threonine and tyrosine phosphorylation by the dual specificity kinase, MKK3. Functionally, serine/threonine kinase which acts as an essential component of the MAP kinase signal transduction pathway. Mapk14a is one of the four p38 MAPKs which play an important role in the cascades of cellular responses evoked by extracellular stimuli such as pro-inflammatory cytokines or physical stress leading to direct activation of transcription factors. Accordingly, p38 MAPKs phosphorylate a broad range of proteins and it has been estimated that they may have approximately 200 to 300 substrates each. Some of the targets are downstream kinases which are activated through phosphorylation and further phosphorylate additional targets. Required for cytokinesis on the future dorsal side of the blastodisc, suggesting a role in symmetrical and synchronous blastomere cleavage. The protein is Mitogen-activated protein kinase 14A (mapk14a) of Danio rerio (Zebrafish).